The primary structure comprises 126 residues: Glycine cleavage system H protein (126 aa).

Residues 22–104 (VAYVGITDYA…YGEGWLIKMK (83 aa)) enclose the Lipoyl-binding domain. Lysine 63 is subject to N6-lipoyllysine.

Belongs to the GcvH family. As to quaternary structure, the glycine cleavage system is composed of four proteins: P, T, L and H. Requires (R)-lipoate as cofactor.

In terms of biological role, the glycine cleavage system catalyzes the degradation of glycine. The H protein shuttles the methylamine group of glycine from the P protein to the T protein. This is Glycine cleavage system H protein from Bacteroides fragilis (strain YCH46).